The sequence spans 459 residues: uncharacterized protein (459 aa).

One can recognise a TRAM domain in the interval Lys-9–Lys-67. [4Fe-4S] cluster-binding residues include Cys-80, Cys-86, Cys-89, and Cys-168. S-adenosyl-L-methionine-binding residues include Gln-292, Tyr-321, Asp-342, and Asp-390. Cys-417 serves as the catalytic Nucleophile.

The protein belongs to the class I-like SAM-binding methyltransferase superfamily. RNA M5U methyltransferase family.

This is an uncharacterized protein from Bacillus anthracis.